The chain runs to 269 residues: Uncharacterised methyltransferase MT1546 (269 aa).

The protein belongs to the methyltransferase superfamily.

The polypeptide is Uncharacterised methyltransferase MT1546 (Mycobacterium tuberculosis (strain CDC 1551 / Oshkosh)).